Consider the following 492-residue polypeptide: Trypanothione reductase (492 aa).

36 to 52 contributes to the FAD binding site; sequence DVQMVHGPPFFSALGGT. A disulfide bond links Cys53 and Cys58. His461 acts as the Proton acceptor in catalysis.

Belongs to the class-I pyridine nucleotide-disulfide oxidoreductase family. In terms of assembly, homodimer. The cofactor is FAD.

It localises to the cytoplasm. It catalyses the reaction trypanothione + NADP(+) = trypanothione disulfide + NADPH + H(+). Trypanothione is the parasite analog of glutathione; this enzyme is the equivalent of glutathione reductase. The protein is Trypanothione reductase (TPR) of Trypanosoma cruzi.